Reading from the N-terminus, the 342-residue chain is tRNA dimethylallyltransferase (342 aa).

Residue 39 to 46 (GPTGSGKT) coordinates ATP. 41-46 (TGSGKT) contributes to the substrate binding site. The interaction with substrate tRNA stretch occupies residues 64–67 (DSMQ).

The protein belongs to the IPP transferase family. Monomer. The cofactor is Mg(2+).

It catalyses the reaction adenosine(37) in tRNA + dimethylallyl diphosphate = N(6)-dimethylallyladenosine(37) in tRNA + diphosphate. Catalyzes the transfer of a dimethylallyl group onto the adenine at position 37 in tRNAs that read codons beginning with uridine, leading to the formation of N6-(dimethylallyl)adenosine (i(6)A). The sequence is that of tRNA dimethylallyltransferase from Chlamydia pneumoniae (Chlamydophila pneumoniae).